Consider the following 626-residue polypeptide: Mitogen-activated protein kinase kinase kinase 3 (626 aa).

The PB1 domain occupies 44-123 (DVRIKFEHNG…KSLRILLLSQ (80 aa)). Composition is skewed to polar residues over residues 146–155 (QSAGDINTIY), 165–174 (LSVSSQNPGR), and 219–232 (SAEN…QSLD). Disordered regions lie at residues 146 to 184 (QSAG…YVPE) and 218 to 262 (SSAE…SDRE). Ser-147 carries the post-translational modification Phosphoserine. Residue Ser-166 is modified to Phosphoserine; by SGK1. Phosphoserine occurs at positions 250 and 312. Ser-337 bears the Phosphoserine; by SGK1 mark. A Phosphoserine modification is found at Ser-340. One can recognise a Protein kinase domain in the interval 362–622 (WRRGKLLGQG…AEELLTHHFA (261 aa)). ATP is bound by residues 368–376 (LGQGAFGRV) and Lys-391. The active-site Proton acceptor is Asp-489.

This sequence belongs to the protein kinase superfamily. STE Ser/Thr protein kinase family. MAP kinase kinase kinase subfamily. Binds both upstream activators and downstream substrates in multimolecular complexes. Part of a complex with MAP2K3, RAC1 and CCM2. Interacts with MAP2K5 and SPAG9. It depends on Mg(2+) as a cofactor. Phosphorylation at Ser-166 and Ser-337 by SGK1 inhibits its activity.

The catalysed reaction is L-seryl-[protein] + ATP = O-phospho-L-seryl-[protein] + ADP + H(+). The enzyme catalyses L-threonyl-[protein] + ATP = O-phospho-L-threonyl-[protein] + ADP + H(+). Activated by phosphorylation on Thr-530. Component of a protein kinase signal transduction cascade. Mediates activation of the NF-kappa-B, AP1 and DDIT3 transcriptional regulators. In Homo sapiens (Human), this protein is Mitogen-activated protein kinase kinase kinase 3 (MAP3K3).